Here is a 380-residue protein sequence, read N- to C-terminus: Glucose-1-phosphate adenylyltransferase (380 aa).

Alpha-D-glucose 1-phosphate-binding positions include glycine 164, 179-180, and serine 190; that span reads EK.

This sequence belongs to the bacterial/plant glucose-1-phosphate adenylyltransferase family. As to quaternary structure, homotetramer.

It carries out the reaction alpha-D-glucose 1-phosphate + ATP + H(+) = ADP-alpha-D-glucose + diphosphate. The protein operates within glycan biosynthesis; glycogen biosynthesis. Involved in the biosynthesis of ADP-glucose, a building block required for the elongation reactions to produce glycogen. Catalyzes the reaction between ATP and alpha-D-glucose 1-phosphate (G1P) to produce pyrophosphate and ADP-Glc. The chain is Glucose-1-phosphate adenylyltransferase from Streptococcus pneumoniae (strain Hungary19A-6).